The chain runs to 184 residues: Guanylate kinase (184 aa).

The Guanylate kinase-like domain maps to 5–183; sequence KKLIIITGPS…TVKEVLKIIK (179 aa). 12–19 provides a ligand contact to ATP; that stretch reads GPSGVGKG.

This sequence belongs to the guanylate kinase family.

The protein resides in the cytoplasm. The catalysed reaction is GMP + ATP = GDP + ADP. Its function is as follows. Essential for recycling GMP and indirectly, cGMP. The chain is Guanylate kinase from Prochlorococcus marinus subsp. pastoris (strain CCMP1986 / NIES-2087 / MED4).